The primary structure comprises 430 residues: Enolase (430 aa).

Q166 contributes to the (2R)-2-phosphoglycerate binding site. The active-site Proton donor is the E208. Mg(2+) is bound by residues D245, E288, and D315. (2R)-2-phosphoglycerate is bound by residues K340, R369, S370, and K391. K340 functions as the Proton acceptor in the catalytic mechanism.

The protein belongs to the enolase family. Mg(2+) serves as cofactor.

Its subcellular location is the cytoplasm. It is found in the secreted. The protein resides in the cell surface. The enzyme catalyses (2R)-2-phosphoglycerate = phosphoenolpyruvate + H2O. It participates in carbohydrate degradation; glycolysis; pyruvate from D-glyceraldehyde 3-phosphate: step 4/5. Functionally, catalyzes the reversible conversion of 2-phosphoglycerate (2-PG) into phosphoenolpyruvate (PEP). It is essential for the degradation of carbohydrates via glycolysis. This chain is Enolase, found in Clostridium kluyveri (strain NBRC 12016).